The sequence spans 201 residues: MEKFTTLTGVAAPLPMINVDTDMIIPKQFLKTIKRTGLGKNLFDEMRYTQDGKEVPDFVLNKPAYRSAKILVAGANFGCGSSREHAPWAIGDFGIRCVIAPSFADIFFNNCFKNGILPIKLPQEQVDKLLDDANRGSNAIVTVDLARQVITGPDGGSISFEVDPFRKHCLLNGLDDIGLTLQREDKIAAFEESRKTSSPWL.

It belongs to the LeuD family. LeuD type 1 subfamily. In terms of assembly, heterodimer of LeuC and LeuD.

It catalyses the reaction (2R,3S)-3-isopropylmalate = (2S)-2-isopropylmalate. It functions in the pathway amino-acid biosynthesis; L-leucine biosynthesis; L-leucine from 3-methyl-2-oxobutanoate: step 2/4. In terms of biological role, catalyzes the isomerization between 2-isopropylmalate and 3-isopropylmalate, via the formation of 2-isopropylmaleate. This is 3-isopropylmalate dehydratase small subunit from Paramagnetospirillum magneticum (strain ATCC 700264 / AMB-1) (Magnetospirillum magneticum).